We begin with the raw amino-acid sequence, 168 residues long: Large ribosomal subunit protein uL10 (168 aa).

It belongs to the universal ribosomal protein uL10 family. In terms of assembly, part of the ribosomal stalk of the 50S ribosomal subunit. The N-terminus interacts with L11 and the large rRNA to form the base of the stalk. The C-terminus forms an elongated spine to which L12 dimers bind in a sequential fashion forming a multimeric L10(L12)X complex.

In terms of biological role, forms part of the ribosomal stalk, playing a central role in the interaction of the ribosome with GTP-bound translation factors. This chain is Large ribosomal subunit protein uL10, found in Clostridium acetobutylicum (strain ATCC 824 / DSM 792 / JCM 1419 / IAM 19013 / LMG 5710 / NBRC 13948 / NRRL B-527 / VKM B-1787 / 2291 / W).